Reading from the N-terminus, the 363-residue chain is MERVYNFSAGPAVLPVPVLEKVQRELLSYNGSGMSVMELSHRSELFQNIIDDAESLIRELMGIPENYKVLFLQGGASLQFDMVPMNLANGKKAVYVNTGSWAKKAISEAKKIQGVEVEVIASSEDRNFSYIPEIPTVSTDAAYLHVTTNNTIEGTAMFDVPDSAVPVVADMSSNILSSVYDVKKFGLIYAGAQKNIGPAGLTLVIVREDLIGQVEGLPSMLDFKVQAENGSMYNTPPTFAVYVAKLVFEWIKEQGGVAGIEALNRKKAALLYDYIEQSDFFSSPVEPSARSLTNIPFVTNSAEFDKAFVKEAEANGFKNLKGHRSVGGMRASLYNAFPIEGVEALIAFMEKFANARKGGEVRV.

Arginine 42 contacts L-glutamate. Pyridoxal 5'-phosphate-binding positions include 76–77 (AS), tryptophan 101, threonine 151, aspartate 170, and glutamine 193. Lysine 194 is subject to N6-(pyridoxal phosphate)lysine. 234–235 (NT) serves as a coordination point for pyridoxal 5'-phosphate.

The protein belongs to the class-V pyridoxal-phosphate-dependent aminotransferase family. SerC subfamily. In terms of assembly, homodimer. It depends on pyridoxal 5'-phosphate as a cofactor.

It localises to the cytoplasm. The catalysed reaction is O-phospho-L-serine + 2-oxoglutarate = 3-phosphooxypyruvate + L-glutamate. The enzyme catalyses 4-(phosphooxy)-L-threonine + 2-oxoglutarate = (R)-3-hydroxy-2-oxo-4-phosphooxybutanoate + L-glutamate. It participates in amino-acid biosynthesis; L-serine biosynthesis; L-serine from 3-phospho-D-glycerate: step 2/3. Its function is as follows. Catalyzes the reversible conversion of 3-phosphohydroxypyruvate to phosphoserine and of 3-hydroxy-2-oxo-4-phosphonooxybutanoate to phosphohydroxythreonine. This Listeria innocua serovar 6a (strain ATCC BAA-680 / CLIP 11262) protein is Phosphoserine aminotransferase.